The following is a 223-amino-acid chain: Deoxyribose-phosphate aldolase (223 aa).

Aspartate 89 functions as the Proton donor/acceptor in the catalytic mechanism. Lysine 152 (schiff-base intermediate with acetaldehyde) is an active-site residue. The active-site Proton donor/acceptor is lysine 181.

It belongs to the DeoC/FbaB aldolase family. DeoC type 1 subfamily.

Its subcellular location is the cytoplasm. The enzyme catalyses 2-deoxy-D-ribose 5-phosphate = D-glyceraldehyde 3-phosphate + acetaldehyde. It participates in carbohydrate degradation; 2-deoxy-D-ribose 1-phosphate degradation; D-glyceraldehyde 3-phosphate and acetaldehyde from 2-deoxy-alpha-D-ribose 1-phosphate: step 2/2. Functionally, catalyzes a reversible aldol reaction between acetaldehyde and D-glyceraldehyde 3-phosphate to generate 2-deoxy-D-ribose 5-phosphate. This is Deoxyribose-phosphate aldolase from Bacillus cereus (strain ATCC 14579 / DSM 31 / CCUG 7414 / JCM 2152 / NBRC 15305 / NCIMB 9373 / NCTC 2599 / NRRL B-3711).